A 66-amino-acid chain; its full sequence is MPKMKTKSAAKKRFSFTATGKVKAGPAGKRHGMIKRSTKFIRDVTGTMILSDADAKIVKKYMPYDR.

Belongs to the bacterial ribosomal protein bL35 family.

This is Large ribosomal subunit protein bL35 from Cereibacter sphaeroides (strain ATCC 17029 / ATH 2.4.9) (Rhodobacter sphaeroides).